The sequence spans 617 residues: Protein AsmA (617 aa).

Residues 1-3 (MRR) are Cytoplasmic-facing. The helical transmembrane segment at 4–24 (FLTTLMILLVVLVAGLSALVL) threads the bilayer. Residues 25-617 (LVNPNDFRDY…KDVKKLLEKM (593 aa)) lie on the Periplasmic side of the membrane. The segment covering 302–319 (TANGENGAAQQGQSQSTL) has biased composition (polar residues). The disordered stretch occupies residues 302–321 (TANGENGAAQQGQSQSTLPR).

This sequence belongs to the AsmA family.

The protein localises to the cell inner membrane. Could be involved in the assembly of outer membrane proteins. May indirectly influence the assembly of outer membrane proteins, potentially by altering outer membrane fluidity. Inhibits the assembly of mutant forms of outer membrane protein F (OmpF). This is Protein AsmA from Escherichia coli (strain K12).